Consider the following 130-residue polypeptide: uncharacterized protein (130 aa).

An N-terminal signal peptide occupies residues 1–19 (MKVLGNILWWAFVGFMAYA).

This is an uncharacterized protein from Escherichia coli (strain K12).